A 137-amino-acid polypeptide reads, in one-letter code: Phosphatidylinositol N-acetylglucosaminyltransferase subunit P (137 aa).

The next 2 helical transmembrane spans lie at V16–G36 and M58–L78.

This sequence belongs to the PIGP family.

It localises to the membrane. The catalysed reaction is a 1,2-diacyl-sn-glycero-3-phospho-(1D-myo-inositol) + UDP-N-acetyl-alpha-D-glucosamine = a 6-(N-acetyl-alpha-D-glucosaminyl)-1-(1,2-diacyl-sn-glycero-3-phospho)-1D-myo-inositol + UDP + H(+). The protein operates within glycolipid biosynthesis; glycosylphosphatidylinositol-anchor biosynthesis. Its function is as follows. Part of the complex catalyzing the transfer of N-acetylglucosamine from UDP-N-acetylglucosamine to phosphatidylinositol, the first step of GPI biosynthesis. In Arabidopsis thaliana (Mouse-ear cress), this protein is Phosphatidylinositol N-acetylglucosaminyltransferase subunit P.